The following is a 90-amino-acid chain: NELL2-interacting cell ontogeny regulator 1 (90 aa).

A signal peptide spans 1–28 (MAPALRSLLSPRTLLLLLLSLALLGARA).

Belongs to the NICOL family. As to quaternary structure, interacts with NELL2; triggers epididymal differentiation. Interacts with cell surface receptor TFRC; the interaction mediates uptake of NICOL1 into fibroblasts. In terms of tissue distribution, expression is enriched in both male and female reproductive organs, including the testis, epididymis, seminal vesicles, coagulating glands, ovary and uterus, and in various non-reproductive organs such as brain, thymus and liver. In testis, expressed in both germ cells and Sertoli cells. Also expressed at low levels in the kidney. Expressed during neocortex and cerebellum development.

The protein resides in the secreted. It localises to the cytoplasm. The protein localises to the perinuclear region. MRNA-binding protein which interacts with a range of target mRNAs including SERPINE1, ACTA2, CCN2 and COL4A1 and may promote extracellular matrix production. Binds to the 3'-UTR of SERPINE1 mRNA and stabilizes the mRNA, possibly by competing for binding with SERBP1 and preventing SERBP1-mediated mRNA degradation. Also binds to the 3'-UTR of ACTA2. Testis-derived lumicrine factor that triggers epididymal differentiation and sperm maturation. In Mus musculus (Mouse), this protein is NELL2-interacting cell ontogeny regulator 1.